The chain runs to 186 residues: MISAGDLRKGTTFELDGQVYNVVDFLHVKPGKGAAFVRTKLKNVITGAVTETTFNPTAKMQEAVIERKEMQYLYSDESFYYFMDQETYEQIPLSFDQVENAIKYLKENMFATIKFYKGEAFSVEAPNFVELKIVSCEPGVKGNTTSNVMKPATLETNAVVQVPLFVNEGETIRVDTRTGEYMERVQ.

This sequence belongs to the elongation factor P family.

It is found in the cytoplasm. Its pathway is protein biosynthesis; polypeptide chain elongation. Its function is as follows. Involved in peptide bond synthesis. Stimulates efficient translation and peptide-bond synthesis on native or reconstituted 70S ribosomes in vitro. Probably functions indirectly by altering the affinity of the ribosome for aminoacyl-tRNA, thus increasing their reactivity as acceptors for peptidyl transferase. The protein is Elongation factor P of Clostridium acetobutylicum (strain ATCC 824 / DSM 792 / JCM 1419 / IAM 19013 / LMG 5710 / NBRC 13948 / NRRL B-527 / VKM B-1787 / 2291 / W).